Here is a 455-residue protein sequence, read N- to C-terminus: Ectonucleoside triphosphate diphosphohydrolase 6 (455 aa).

At 1–12 the chain is on the cytoplasmic side; that stretch reads MRKIPNHGTLRM. A helical; Signal-anchor for type II membrane protein membrane pass occupies residues 13 to 32; that stretch reads TKVAYPLGLCVGLFIYVAYI. Residues 33-455 are Lumenal-facing; sequence KWHRASAAQA…SLKRQKVPAL (423 aa). An N-linked (GlcNAc...) asparagine glycan is attached at Asn-192. Catalysis depends on Glu-196, which acts as the Proton acceptor. A glycan (N-linked (GlcNAc...) asparagine) is linked at Asn-256. 2 cysteine pairs are disulfide-bonded: Cys-297/Cys-327 and Cys-387/Cys-401.

The protein belongs to the GDA1/CD39 NTPase family. Requires Ca(2+) as cofactor. It depends on Mg(2+) as a cofactor. Post-translationally, might be cleaved at the N-terminus, retained in an intracellular membrane compartment and in addition be released into the extracellular medium. N-glycosylated. Expressed in heart and brain.

The protein localises to the golgi apparatus membrane. It is found in the secreted. The protein resides in the cell membrane. It catalyses the reaction a ribonucleoside 5'-diphosphate + H2O = a ribonucleoside 5'-phosphate + phosphate + H(+). It carries out the reaction IDP + H2O = IMP + phosphate + H(+). The enzyme catalyses GDP + H2O = GMP + phosphate + H(+). The catalysed reaction is UDP + H2O = UMP + phosphate + H(+). Functionally, catalyzes the hydrolysis of nucleoside triphosphates and diphosphates in a calcium- or magnesium-dependent manner. Has a strong preference for nucleoside diphosphates, preferentially hydrolyzes GDP, IDP, and UDP, with slower hydrolysis of CDP, ITP, GTP, CTP, ADP, and UTP and virtually no hydrolysis of ATP. The membrane bound form might support glycosylation reactions in the Golgi apparatus and, when released from cells, might catalyze the hydrolysis of extracellular nucleotides. This Rattus norvegicus (Rat) protein is Ectonucleoside triphosphate diphosphohydrolase 6 (Entpd6).